Consider the following 122-residue polypeptide: Large ribosomal subunit protein uL14 (122 aa).

Belongs to the universal ribosomal protein uL14 family. As to quaternary structure, part of the 50S ribosomal subunit. Forms a cluster with proteins L3 and L19. In the 70S ribosome, L14 and L19 interact and together make contacts with the 16S rRNA in bridges B5 and B8.

Its function is as follows. Binds to 23S rRNA. Forms part of two intersubunit bridges in the 70S ribosome. The sequence is that of Large ribosomal subunit protein uL14 from Bradyrhizobium sp. (strain BTAi1 / ATCC BAA-1182).